The sequence spans 435 residues: 3-ketoacyl-CoA thiolase (435 aa).

Cysteine 98 acts as the Acyl-thioester intermediate in catalysis. Catalysis depends on proton acceptor residues histidine 391 and cysteine 421.

It belongs to the thiolase-like superfamily. Thiolase family. As to quaternary structure, heterotetramer of two alpha chains (FadJ) and two beta chains (FadI).

The protein localises to the cytoplasm. It carries out the reaction an acyl-CoA + acetyl-CoA = a 3-oxoacyl-CoA + CoA. It participates in lipid metabolism; fatty acid beta-oxidation. In terms of biological role, catalyzes the final step of fatty acid oxidation in which acetyl-CoA is released and the CoA ester of a fatty acid two carbons shorter is formed. This Vibrio vulnificus (strain YJ016) protein is 3-ketoacyl-CoA thiolase.